The following is a 183-amino-acid chain: Ferritin heavy chain (183 aa).

Residue M1 is modified to N-acetylmethionine. Position 2 is an N-acetylthreonine; in Ferritin heavy chain, N-terminally processed (T2). Residues 11-160 form the Ferritin-like diiron domain; that stretch reads QNYHQDSEAA…DHVTNLRKMG (150 aa). Residues E28, E63, H66, E108, and Q142 each contribute to the Fe cation site. Residues S179 and S183 each carry the phosphoserine modification.

Belongs to the ferritin family. In terms of assembly, oligomer of 24 subunits. There are two types of subunits: L (light) chain and H (heavy) chain. The major chain can be light or heavy, depending on the species and tissue type. The functional molecule forms a roughly spherical shell with a diameter of 12 nm and contains a central cavity into which the insoluble mineral iron core is deposited. Interacts with NCOA4; NCOA4 promotes targeting of the iron-binding ferritin complex to autolysosomes following starvation or iron depletion.

Its subcellular location is the cytoplasm. It localises to the lysosome. The protein resides in the cytoplasmic vesicle. It is found in the autophagosome. The catalysed reaction is 4 Fe(2+) + O2 + 4 H(+) = 4 Fe(3+) + 2 H2O. Stores iron in a soluble, non-toxic, readily available form. Important for iron homeostasis. Has ferroxidase activity. Iron is taken up in the ferrous form and deposited as ferric hydroxides after oxidation. Also plays a role in delivery of iron to cells. Mediates iron uptake in capsule cells of the developing kidney. Delivery to lysosomes is mediated by the cargo receptor NCOA4 for autophagic degradation and release of iron. In Canis lupus familiaris (Dog), this protein is Ferritin heavy chain (FTH1).